Here is a 105-residue protein sequence, read N- to C-terminus: Sec-independent protein translocase protein TatA (105 aa).

A helical transmembrane segment spans residues Met-1 to Ala-21. The segment covering Glu-41–Asp-50 has biased composition (basic and acidic residues). The disordered stretch occupies residues Glu-41–Ser-105. Over residues Pro-52 to Pro-92 the composition is skewed to low complexity. Residues Gln-96 to Ser-105 are compositionally biased toward basic and acidic residues.

Belongs to the TatA/E family. The Tat system comprises two distinct complexes: a TatABC complex, containing multiple copies of TatA, TatB and TatC subunits, and a separate TatA complex, containing only TatA subunits. Substrates initially bind to the TatABC complex, which probably triggers association of the separate TatA complex to form the active translocon.

Its subcellular location is the cell membrane. Its function is as follows. Part of the twin-arginine translocation (Tat) system that transports large folded proteins containing a characteristic twin-arginine motif in their signal peptide across membranes. TatA could form the protein-conducting channel of the Tat system. The protein is Sec-independent protein translocase protein TatA of Corynebacterium glutamicum (strain ATCC 13032 / DSM 20300 / JCM 1318 / BCRC 11384 / CCUG 27702 / LMG 3730 / NBRC 12168 / NCIMB 10025 / NRRL B-2784 / 534).